A 255-amino-acid chain; its full sequence is Acid phosphatase 1 (255 aa).

The first 15 residues, Met-1–Gly-15, serve as a signal peptide directing secretion. N-linked (GlcNAc...) asparagine glycosylation is present at Asn-142.

It belongs to the APS1/VSP family.

The catalysed reaction is a phosphate monoester + H2O = an alcohol + phosphate. In Solanum lycopersicum (Tomato), this protein is Acid phosphatase 1 (APS1).